We begin with the raw amino-acid sequence, 239 residues long: 2,3,4,5-tetrahydropyridine-2,6-dicarboxylate N-acetyltransferase (239 aa).

This sequence belongs to the transferase hexapeptide repeat family. DapH subfamily.

It carries out the reaction (S)-2,3,4,5-tetrahydrodipicolinate + acetyl-CoA + H2O = L-2-acetamido-6-oxoheptanedioate + CoA. It functions in the pathway amino-acid biosynthesis; L-lysine biosynthesis via DAP pathway; LL-2,6-diaminopimelate from (S)-tetrahydrodipicolinate (acetylase route): step 1/3. Functionally, catalyzes the transfer of an acetyl group from acetyl-CoA to tetrahydrodipicolinate. The sequence is that of 2,3,4,5-tetrahydropyridine-2,6-dicarboxylate N-acetyltransferase from Staphylococcus aureus (strain JH9).